The primary structure comprises 375 residues: Carbamoyl phosphate synthase small chain (375 aa).

Positions 1–184 (MVSLYLENGL…LDYKPFDEKI (184 aa)) are CPSase. Residues Ser-44, Gly-240, and Gly-242 each contribute to the L-glutamine site. In terms of domain architecture, Glutamine amidotransferase type-1 spans 188 to 375 (IIAVLDFGAK…KEFVGLLEGF (188 aa)). Residue Cys-268 is the Nucleophile of the active site. Positions 269, 272, 310, and 313 each coordinate L-glutamine. Catalysis depends on residues His-351 and Glu-353.

It belongs to the CarA family. In terms of assembly, composed of two chains; the small (or glutamine) chain promotes the hydrolysis of glutamine to ammonia, which is used by the large (or ammonia) chain to synthesize carbamoyl phosphate. Tetramer of heterodimers (alpha,beta)4.

The enzyme catalyses hydrogencarbonate + L-glutamine + 2 ATP + H2O = carbamoyl phosphate + L-glutamate + 2 ADP + phosphate + 2 H(+). It carries out the reaction L-glutamine + H2O = L-glutamate + NH4(+). Its pathway is amino-acid biosynthesis; L-arginine biosynthesis; carbamoyl phosphate from bicarbonate: step 1/1. It functions in the pathway pyrimidine metabolism; UMP biosynthesis via de novo pathway; (S)-dihydroorotate from bicarbonate: step 1/3. In terms of biological role, small subunit of the glutamine-dependent carbamoyl phosphate synthetase (CPSase). CPSase catalyzes the formation of carbamoyl phosphate from the ammonia moiety of glutamine, carbonate, and phosphate donated by ATP, constituting the first step of 2 biosynthetic pathways, one leading to arginine and/or urea and the other to pyrimidine nucleotides. The small subunit (glutamine amidotransferase) binds and cleaves glutamine to supply the large subunit with the substrate ammonia. This Helicobacter pylori (strain J99 / ATCC 700824) (Campylobacter pylori J99) protein is Carbamoyl phosphate synthase small chain.